Reading from the N-terminus, the 134-residue chain is MATNVKKVKKLRPKNVTVGIAHIHSSHQNTIISFTDKQGNVISWASSGSIGFKGTKKKTAYAATLATAAAAQKAREHGMREVIVELKGTGQGKEAARKQIITSGLNILLTKDVTPVPHNGTRPPRKWFKRQEKR.

The interval 114–134 (TPVPHNGTRPPRKWFKRQEKR) is disordered. Residues 123–134 (PPRKWFKRQEKR) show a composition bias toward basic residues.

It belongs to the universal ribosomal protein uS11 family. Part of the 30S ribosomal subunit. Interacts with proteins S7 and S18. Binds to IF-3.

Functionally, located on the platform of the 30S subunit, it bridges several disparate RNA helices of the 16S rRNA. Forms part of the Shine-Dalgarno cleft in the 70S ribosome. The sequence is that of Small ribosomal subunit protein uS11 from Mesomycoplasma hyopneumoniae (strain 232) (Mycoplasma hyopneumoniae).